Consider the following 324-residue polypeptide: Quinolinate synthase 2 (324 aa).

Residues His48 and Ser66 each coordinate iminosuccinate. Cys111 contributes to the [4Fe-4S] cluster binding site. Iminosuccinate contacts are provided by residues Tyr137 to Asn139 and Ser154. Cys196 lines the [4Fe-4S] cluster pocket. Iminosuccinate-binding positions include His222 to Glu224 and Thr239. Cys282 provides a ligand contact to [4Fe-4S] cluster.

This sequence belongs to the quinolinate synthase family. Type 2 subfamily. [4Fe-4S] cluster serves as cofactor.

It is found in the cytoplasm. It catalyses the reaction iminosuccinate + dihydroxyacetone phosphate = quinolinate + phosphate + 2 H2O + H(+). It participates in cofactor biosynthesis; NAD(+) biosynthesis; quinolinate from iminoaspartate: step 1/1. Catalyzes the condensation of iminoaspartate with dihydroxyacetone phosphate to form quinolinate. The protein is Quinolinate synthase 2 of Mesorhizobium japonicum (strain LMG 29417 / CECT 9101 / MAFF 303099) (Mesorhizobium loti (strain MAFF 303099)).